We begin with the raw amino-acid sequence, 1005 residues long: Regulator of telomere elongation helicase 1 homolog (1005 aa).

In terms of domain architecture, Helicase ATP-binding spans 7–322; that stretch reads AGIPVHFPFE…KEMLLELEKA (316 aa). 42 to 49 contacts ATP; it reads SPTGTGKT. C145, C163, C172, and C208 together coordinate [4Fe-4S] cluster. The DEAH box signature appears at 251–254; that stretch reads DEAH. Position 876 is a phosphothreonine (T876). Residues 893 to 917 form a disordered region; sequence NGPLKTEPSEPATTSSSFCPTPAQS.

Belongs to the helicase family. RAD3/XPD subfamily.

The protein localises to the nucleus. The enzyme catalyses ATP + H2O = ADP + phosphate + H(+). In terms of biological role, a probable ATP-dependent DNA helicase implicated in DNA repair and the maintenance of genomic stability. Acts as an anti-recombinase to counteract toxic recombination and limit crossover during meiosis. Regulates meiotic recombination and crossover homeostasis by physically dissociating strand invasion events and thereby promotes noncrossover repair by meiotic synthesis dependent strand annealing (SDSA) as well as disassembly of D loop recombination intermediates. The sequence is that of Regulator of telomere elongation helicase 1 homolog from Drosophila virilis (Fruit fly).